The sequence spans 427 residues: Enolase (427 aa).

Q163 contributes to the (2R)-2-phosphoglycerate binding site. E205 functions as the Proton donor in the catalytic mechanism. Mg(2+)-binding residues include D242, E285, and D312. (2R)-2-phosphoglycerate contacts are provided by K337, R366, S367, and K388. K337 functions as the Proton acceptor in the catalytic mechanism.

This sequence belongs to the enolase family. It depends on Mg(2+) as a cofactor.

The protein localises to the cytoplasm. It localises to the secreted. It is found in the cell surface. The enzyme catalyses (2R)-2-phosphoglycerate = phosphoenolpyruvate + H2O. It participates in carbohydrate degradation; glycolysis; pyruvate from D-glyceraldehyde 3-phosphate: step 4/5. In terms of biological role, catalyzes the reversible conversion of 2-phosphoglycerate (2-PG) into phosphoenolpyruvate (PEP). It is essential for the degradation of carbohydrates via glycolysis. The sequence is that of Enolase from Herminiimonas arsenicoxydans.